The chain runs to 963 residues: Importin-13 (963 aa).

HEAT repeat units follow at residues 24–54 (ESVE…QAQV), 56–88 (PQAW…KTSR), 95–135 (TDQY…LSMM), 142–179 (AVAD…EFQT), 194–231 (LAVE…SWVQ), 236–268 (LQDC…NAIS), 276–325 (VNTL…ALLD), 330–372 (WQSF…DDIL), 375–438 (EAEK…YEML), 440–476 (AELL…FQSI), 487–522 (VVPG…WLAD), 524–558 (PVMI…CREC), 562–600 (LPPY…LLSA), 603–648 (VEEI…SNLF), 676–716 (PVVV…VKTL), 720–754 (FAPM…VHIF), 761–803 (FPPI…ALKR), 815–845 (VKAV…TELL), 860–893 (EDGR…FALN), and 897–931 (FSLL…QQIL). Positions 45 to 111 (AQKWLMQAQV…KAQLFTQITR (67 aa)) constitute an Importin N-terminal domain.

Belongs to the importin beta family. As to quaternary structure, interacts with UBC9, RAN, RBM8A, eIF-1A and PAX6.

The protein localises to the cytoplasm. The protein resides in the nucleus. In terms of biological role, functions in nuclear protein import as nuclear transport receptor. Serves as receptor for nuclear localization signals (NLS) in cargo substrates. Is thought to mediate docking of the importin/substrate complex to the nuclear pore complex (NPC) through binding to nucleoporin and the complex is subsequently translocated through the pore by an energy requiring, Ran-dependent mechanism. At the nucleoplasmic side of the NPC, Ran binds to the importin, the importin/substrate complex dissociates and importin is re-exported from the nucleus to the cytoplasm where GTP hydrolysis releases Ran. The directionality of nuclear import is thought to be conferred by an asymmetric distribution of the GTP- and GDP-bound forms of Ran between the cytoplasm and nucleus. Mediates the nuclear import of UBC9, the RBM8A/MAGOH complex, PAX6 and probably other members of the paired homeobox family. Also mediates nuclear export of eIF-1A, and the cytoplasmic release of eIF-1A is triggered by the loading of import substrates onto IPO13. The chain is Importin-13 (IPO13) from Pongo abelii (Sumatran orangutan).